We begin with the raw amino-acid sequence, 157 residues long: Endoribonuclease YbeY (157 aa).

Zn(2+)-binding residues include His-111, His-115, and His-121.

The protein belongs to the endoribonuclease YbeY family. Zn(2+) is required as a cofactor.

It localises to the cytoplasm. Its function is as follows. Single strand-specific metallo-endoribonuclease involved in late-stage 70S ribosome quality control and in maturation of the 3' terminus of the 16S rRNA. The chain is Endoribonuclease YbeY from Pseudomonas entomophila (strain L48).